Reading from the N-terminus, the 145-residue chain is 3-hydroxyacyl-[acyl-carrier-protein] dehydratase FabZ (145 aa).

The active site involves His51.

The protein belongs to the thioester dehydratase family. FabZ subfamily.

The protein localises to the cytoplasm. It catalyses the reaction a (3R)-hydroxyacyl-[ACP] = a (2E)-enoyl-[ACP] + H2O. Involved in unsaturated fatty acids biosynthesis. Catalyzes the dehydration of short chain beta-hydroxyacyl-ACPs and long chain saturated and unsaturated beta-hydroxyacyl-ACPs. This is 3-hydroxyacyl-[acyl-carrier-protein] dehydratase FabZ from Staphylococcus haemolyticus (strain JCSC1435).